The primary structure comprises 599 residues: Omega-hydroxyceramide transacylase (599 aa).

The PNPLA domain maps to 16 to 185 (ISFSGSGFLS…TSMQPCSFWT (170 aa)). The GXSXG motif lies at 51 to 55 (GTSAG). The active-site Nucleophile is the S53. D172 acts as the Proton acceptor in catalysis. The short motif at 172 to 174 (DGG) is the DGA/G element. Residues 289–563 (PPPPSLQNLP…PASKLKSAPC (275 aa)) form a disordered region. Polar residues-rich tracts occupy residues 325–335 (SSAAPSVQTPE) and 350–362 (VSIS…SPLS). The span at 443-454 (SPESPRLLLRSS) shows a compositional bias: low complexity. Residues 468-478 (PLSPSTPPAGP) are compositionally biased toward pro residues. A compositionally biased stretch (polar residues) spans 490–501 (ATGSPALSQLTG). A compositionally biased stretch (low complexity) spans 551–563 (SKKPASKLKSAPC).

As to expression, specifically expressed in skin by keratinocytes, at the boundary area between the nucleated stratum granulosum and the denucleated stratum corneum in the epidermis (at protein level). Also expressed in stomach and other surface lining tissues like intestine and tongue. Also detected in testis as well as in other tissues but at very low level.

Its subcellular location is the cytoplasm. The catalysed reaction is an N-(omega-hydroxy-ultra-long chain fatty acyl)-sphingoid base + a (9Z,12Z)-octadecadienoyl-containing triacyl-sn-glycerol = an N-[omega-(9Z,12Z-octadecadienoyloxy)-O-ultra-long chain fatty acyl]-sphingoid base + a diacylglycerol. It catalyses the reaction an N-(omega-hydroxy-ultra-long chain fatty acyl)-sphing-4-enine + a (9Z,12Z)-octadecadienoyl-containing triacyl-sn-glycerol = an N-(omega-(9Z,12Z-octadecadienoyloxy)-ultra-long chain fatty acyl)-sphing-4-enine + a diacylglycerol. It carries out the reaction N-(28-hydroxyoctacosanoyl)-sphing-4-enine + a (9Z,12Z)-octadecadienoyl-containing triacyl-sn-glycerol = N-(28-(9Z,12Z-octadecadienoyloxy)-octacosanoyl)-sphing-4-enine + a diacylglycerol. The enzyme catalyses N-(30-hydroxytriacontanoyl)-sphing-4-enine + 1,2,3-tri-(9Z,12Z)-octadecadienoylglycerol = N-[30-(9Z,12Z-octadecadienoyloxy)-triacontanoyl]-sphing-4-enine + di-(9Z,12Z)-octadecadienoylglycerol. The catalysed reaction is N-(32-hydroxydotriacontanoyl)-sphing-4-enine + a (9Z,12Z)-octadecadienoyl-containing triacyl-sn-glycerol = N-(32-(9Z,12Z-octadecadienoyloxy)-dotricontanoyl)-sphing-4-enine + a diacylglycerol. It catalyses the reaction N-(32-hydroxydotriacontenoyl)-sphing-4-enine + a (9Z,12Z)-octadecadienoyl-containing triacyl-sn-glycerol = an N-(32-(9Z,12Z-octadecadienoyloxy)-dotriacontenoyl)-sphing-4-enine + a diacylglycerol. It carries out the reaction an N-(34-hydroxytetratriacontenoyl)-sphing-4-enine + a (9Z,12Z)-octadecadienoyl-containing triacyl-sn-glycerol = an N-(34-(9Z,12Z-octadecadienoyloxy)-tetratriacontenoyl)-sphing-4-enine + a diacylglycerol. The enzyme catalyses an N-(34-hydroxytetratriacontadienoyl)-sphing-4-enine + a (9Z,12Z)-octadecadienoyl-containing triacyl-sn-glycerol = an N-(34-(9Z,12Z-octadecadienoyloxy)-tetratriacontadienoyl)-sphing-4-enine + a diacylglycerol. The catalysed reaction is an N-(36-hydroxyhexatriacontenoyl)-sphing-4-enine + a (9Z,12Z)-octadecadienoyl-containing triacyl-sn-glycerol = an N-(36-(9Z,12Z-octadecadienoyloxy)-hexatriacontenoyl)-sphing-4-enine + a diacylglycerol. It catalyses the reaction an N-(36-hydroxyhexatriacontadienoyl)-sphing-4-enine + a (9Z,12Z)-octadecadienoyl-containing triacyl-sn-glycerol = an N-(36-(9Z,12Z-octadecadienoyloxy)-hexatriacontadienoyl)-sphing-4-enine + a diacylglycerol. It carries out the reaction an N-(38-hydroxyoctatriacontenoyl)-sphing-4-enine + a (9Z,12Z)-octadecadienoyl-containing triacyl-sn-glycerol = an N-(38-(9Z,12Z-octadecadienoyloxy)-octatriacontenoyl)-sphing-4-enine + a diacylglycerol. Functionally, omega-hydroxyceramide transacylase involved in the synthesis of omega-O-acylceramides (esterified omega-hydroxyacyl-sphingosine; EOS), which are extremely hydrophobic lipids involved in skin barrier formation. Catalyzes the last step of the synthesis of omega-O-acylceramides by transferring linoleic acid from triglycerides to an omega-hydroxyceramide. Omega-O-acylceramides, are required for the biogenesis of lipid lamellae in the stratum corneum and the formation of the cornified lipid envelope which are essential for the epidermis barrier function. These lipids also play a role in keratinocyte differentiation. May also act on omega-hydroxylated ultra-long chain fatty acids (omega-OH ULCFA) and acylglucosylceramides (GlcEOS). This is Omega-hydroxyceramide transacylase from Mus musculus (Mouse).